The chain runs to 237 residues: Ribitol-5-phosphate cytidylyltransferase (237 aa).

Residues leucine 7–glycine 10, glycine 81–serine 87, and serine 112 each bind CTP.

This sequence belongs to the IspD/TarI cytidylyltransferase family. TarI subfamily.

It carries out the reaction D-ribitol 5-phosphate + CTP + H(+) = CDP-L-ribitol + diphosphate. It participates in cell wall biogenesis; poly(ribitol phosphate) teichoic acid biosynthesis. Functionally, catalyzes the transfer of the cytidylyl group of CTP to D-ribitol 5-phosphate. The protein is Ribitol-5-phosphate cytidylyltransferase of Bacillus spizizenii (strain ATCC 23059 / NRRL B-14472 / W23) (Bacillus subtilis subsp. spizizenii).